The sequence spans 245 residues: 1-(5-phosphoribosyl)-5-[(5-phosphoribosylamino)methylideneamino] imidazole-4-carboxamide isomerase (245 aa).

The Proton acceptor role is filled by Asp7. The active-site Proton donor is Asp129.

The protein belongs to the HisA/HisF family.

It is found in the cytoplasm. The enzyme catalyses 1-(5-phospho-beta-D-ribosyl)-5-[(5-phospho-beta-D-ribosylamino)methylideneamino]imidazole-4-carboxamide = 5-[(5-phospho-1-deoxy-D-ribulos-1-ylimino)methylamino]-1-(5-phospho-beta-D-ribosyl)imidazole-4-carboxamide. It functions in the pathway amino-acid biosynthesis; L-histidine biosynthesis; L-histidine from 5-phospho-alpha-D-ribose 1-diphosphate: step 4/9. The protein is 1-(5-phosphoribosyl)-5-[(5-phosphoribosylamino)methylideneamino] imidazole-4-carboxamide isomerase of Escherichia coli O45:K1 (strain S88 / ExPEC).